Consider the following 239-residue polypeptide: Purine nucleoside phosphorylase DeoD-type (239 aa).

H5 is an a purine D-ribonucleoside binding site. Phosphate contacts are provided by residues G21, R25, R44, and 88-91 (RIGS). A purine D-ribonucleoside contacts are provided by residues 180–182 (EME) and 204–205 (TD). D205 serves as the catalytic Proton donor.

It belongs to the PNP/UDP phosphorylase family. In terms of assembly, homohexamer; trimer of homodimers.

It catalyses the reaction a purine D-ribonucleoside + phosphate = a purine nucleobase + alpha-D-ribose 1-phosphate. The catalysed reaction is a purine 2'-deoxy-D-ribonucleoside + phosphate = a purine nucleobase + 2-deoxy-alpha-D-ribose 1-phosphate. Functionally, catalyzes the reversible phosphorolytic breakdown of the N-glycosidic bond in the beta-(deoxy)ribonucleoside molecules, with the formation of the corresponding free purine bases and pentose-1-phosphate. The sequence is that of Purine nucleoside phosphorylase DeoD-type from Aliivibrio fischeri (strain ATCC 700601 / ES114) (Vibrio fischeri).